We begin with the raw amino-acid sequence, 449 residues long: Exodeoxyribonuclease 7 large subunit (449 aa).

The protein belongs to the XseA family. In terms of assembly, heterooligomer composed of large and small subunits.

It is found in the cytoplasm. The enzyme catalyses Exonucleolytic cleavage in either 5'- to 3'- or 3'- to 5'-direction to yield nucleoside 5'-phosphates.. In terms of biological role, bidirectionally degrades single-stranded DNA into large acid-insoluble oligonucleotides, which are then degraded further into small acid-soluble oligonucleotides. In Salmonella paratyphi B (strain ATCC BAA-1250 / SPB7), this protein is Exodeoxyribonuclease 7 large subunit.